The primary structure comprises 141 residues: Ribosomal RNA large subunit methyltransferase H (141 aa).

Glycine 88 contributes to the S-adenosyl-L-methionine binding site.

The protein belongs to the RNA methyltransferase RlmH family. Homodimer.

The protein resides in the cytoplasm. The catalysed reaction is pseudouridine(1915) in 23S rRNA + S-adenosyl-L-methionine = N(3)-methylpseudouridine(1915) in 23S rRNA + S-adenosyl-L-homocysteine + H(+). In terms of biological role, specifically methylates the pseudouridine at position 1915 (m3Psi1915) in 23S rRNA. The sequence is that of Ribosomal RNA large subunit methyltransferase H from Novosphingobium aromaticivorans (strain ATCC 700278 / DSM 12444 / CCUG 56034 / CIP 105152 / NBRC 16084 / F199).